The primary structure comprises 629 residues: tRNA uridine 5-carboxymethylaminomethyl modification enzyme MnmG (629 aa).

Residues 13-18, valine 125, and serine 180 each bind FAD; that span reads GGGHAG. 273–287 is a binding site for NAD(+); it reads GPRYCPSIEDKVMRF. Glutamine 370 is a binding site for FAD.

This sequence belongs to the MnmG family. Homodimer. Heterotetramer of two MnmE and two MnmG subunits. FAD serves as cofactor.

It localises to the cytoplasm. NAD-binding protein involved in the addition of a carboxymethylaminomethyl (cmnm) group at the wobble position (U34) of certain tRNAs, forming tRNA-cmnm(5)s(2)U34. The chain is tRNA uridine 5-carboxymethylaminomethyl modification enzyme MnmG from Salmonella agona (strain SL483).